Consider the following 362-residue polypeptide: Aminomethyltransferase (362 aa).

It belongs to the GcvT family. As to quaternary structure, the glycine cleavage system is composed of four proteins: P, T, L and H.

It catalyses the reaction N(6)-[(R)-S(8)-aminomethyldihydrolipoyl]-L-lysyl-[protein] + (6S)-5,6,7,8-tetrahydrofolate = N(6)-[(R)-dihydrolipoyl]-L-lysyl-[protein] + (6R)-5,10-methylene-5,6,7,8-tetrahydrofolate + NH4(+). Functionally, the glycine cleavage system catalyzes the degradation of glycine. This is Aminomethyltransferase from Porphyromonas gingivalis (strain ATCC 33277 / DSM 20709 / CIP 103683 / JCM 12257 / NCTC 11834 / 2561).